The sequence spans 362 residues: GDSL esterase/lipase At5g18430 (362 aa).

An N-terminal signal peptide occupies residues 1–19; that stretch reads MTISTVIAFMSMFLVFVMS. The active-site Nucleophile is the S35. N117 is a glycosylation site (N-linked (GlcNAc...) asparagine). Catalysis depends on residues D327 and H330. N-linked (GlcNAc...) asparagine glycosylation is present at N355.

The protein belongs to the 'GDSL' lipolytic enzyme family.

Its subcellular location is the secreted. This chain is GDSL esterase/lipase At5g18430, found in Arabidopsis thaliana (Mouse-ear cress).